The primary structure comprises 343 residues: Anthranilate phosphoribosyltransferase (343 aa).

Residues Gly84, 87 to 88 (GD), Thr92, 94 to 97 (NIST), 112 to 120 (KHGNRSVSS), and Ser124 contribute to the 5-phospho-alpha-D-ribose 1-diphosphate site. Residue Gly84 coordinates anthranilate. Residue Ser96 participates in Mg(2+) binding. Asn115 is a binding site for anthranilate. Arg170 contributes to the anthranilate binding site. Mg(2+)-binding residues include Asp229 and Glu230.

This sequence belongs to the anthranilate phosphoribosyltransferase family. As to quaternary structure, homodimer. The cofactor is Mg(2+).

The enzyme catalyses N-(5-phospho-beta-D-ribosyl)anthranilate + diphosphate = 5-phospho-alpha-D-ribose 1-diphosphate + anthranilate. The protein operates within amino-acid biosynthesis; L-tryptophan biosynthesis; L-tryptophan from chorismate: step 2/5. Catalyzes the transfer of the phosphoribosyl group of 5-phosphorylribose-1-pyrophosphate (PRPP) to anthranilate to yield N-(5'-phosphoribosyl)-anthranilate (PRA). The polypeptide is Anthranilate phosphoribosyltransferase (Stenotrophomonas maltophilia (strain K279a)).